The sequence spans 319 residues: Methionyl-tRNA formyltransferase (319 aa).

113-116 (SLLP) contributes to the (6S)-5,6,7,8-tetrahydrofolate binding site.

The protein belongs to the Fmt family.

It catalyses the reaction L-methionyl-tRNA(fMet) + (6R)-10-formyltetrahydrofolate = N-formyl-L-methionyl-tRNA(fMet) + (6S)-5,6,7,8-tetrahydrofolate + H(+). Attaches a formyl group to the free amino group of methionyl-tRNA(fMet). The formyl group appears to play a dual role in the initiator identity of N-formylmethionyl-tRNA by promoting its recognition by IF2 and preventing the misappropriation of this tRNA by the elongation apparatus. The polypeptide is Methionyl-tRNA formyltransferase (Pseudomonas fluorescens (strain ATCC BAA-477 / NRRL B-23932 / Pf-5)).